The following is a 132-amino-acid chain: Small ribosomal subunit protein uS8 (132 aa).

It belongs to the universal ribosomal protein uS8 family. As to quaternary structure, part of the 30S ribosomal subunit. Contacts proteins S5 and S12.

Its function is as follows. One of the primary rRNA binding proteins, it binds directly to 16S rRNA central domain where it helps coordinate assembly of the platform of the 30S subunit. In Ureaplasma urealyticum serovar 10 (strain ATCC 33699 / Western), this protein is Small ribosomal subunit protein uS8.